The chain runs to 515 residues: Proline--tRNA ligase (515 aa).

It belongs to the class-II aminoacyl-tRNA synthetase family. ProS type 3 subfamily. In terms of assembly, homodimer.

The protein localises to the cytoplasm. It catalyses the reaction tRNA(Pro) + L-proline + ATP = L-prolyl-tRNA(Pro) + AMP + diphosphate. Its function is as follows. Catalyzes the attachment of proline to tRNA(Pro) in a two-step reaction: proline is first activated by ATP to form Pro-AMP and then transferred to the acceptor end of tRNA(Pro). The sequence is that of Proline--tRNA ligase from Novosphingobium aromaticivorans (strain ATCC 700278 / DSM 12444 / CCUG 56034 / CIP 105152 / NBRC 16084 / F199).